The sequence spans 190 residues: Glutamyl-tRNA(Gln) amidotransferase subunit F, mitochondrial (190 aa).

This sequence belongs to the GatF family. In terms of assembly, subunit of the heterotrimeric GatFAB amidotransferase (AdT) complex, composed of A, B and F subunits.

It is found in the mitochondrion inner membrane. The catalysed reaction is L-glutamyl-tRNA(Gln) + L-glutamine + ATP + H2O = L-glutaminyl-tRNA(Gln) + L-glutamate + ADP + phosphate + H(+). Allows the formation of correctly charged Gln-tRNA(Gln) through the transamidation of misacylated Glu-tRNA(Gln) in the mitochondria. The reaction takes place in the presence of glutamine and ATP through an activated gamma-phospho-Glu-tRNA(Gln). Required for proper protein synthesis within the mitochondrion. This Eremothecium gossypii (strain ATCC 10895 / CBS 109.51 / FGSC 9923 / NRRL Y-1056) (Yeast) protein is Glutamyl-tRNA(Gln) amidotransferase subunit F, mitochondrial.